The chain runs to 535 residues: Bifunctional purine biosynthesis protein PurH (535 aa).

In terms of domain architecture, MGS-like spans 6-151; sequence TRLPVRRALI…KNHKDVAIVV (146 aa).

It belongs to the PurH family.

It carries out the reaction (6R)-10-formyltetrahydrofolate + 5-amino-1-(5-phospho-beta-D-ribosyl)imidazole-4-carboxamide = 5-formamido-1-(5-phospho-D-ribosyl)imidazole-4-carboxamide + (6S)-5,6,7,8-tetrahydrofolate. The catalysed reaction is IMP + H2O = 5-formamido-1-(5-phospho-D-ribosyl)imidazole-4-carboxamide. It participates in purine metabolism; IMP biosynthesis via de novo pathway; 5-formamido-1-(5-phospho-D-ribosyl)imidazole-4-carboxamide from 5-amino-1-(5-phospho-D-ribosyl)imidazole-4-carboxamide (10-formyl THF route): step 1/1. The protein operates within purine metabolism; IMP biosynthesis via de novo pathway; IMP from 5-formamido-1-(5-phospho-D-ribosyl)imidazole-4-carboxamide: step 1/1. The protein is Bifunctional purine biosynthesis protein PurH of Ectopseudomonas mendocina (strain ymp) (Pseudomonas mendocina).